The following is a 206-amino-acid chain: Max dimerization protein 3 (206 aa).

Residues 8–25 (IQVLLQAAEFLERREREA) are interaction with SIN3A and SIN3B. 2 disordered regions span residues 25-67 (AEHG…ELEK) and 146-171 (RERL…QEEL). The bHLH domain maps to 57-109 (SGRSVHNELEKRRRAQLKRCLERLKQQMPLGADCARYTTLSLLRRARMHIQKL).

Efficient DNA binding requires dimerization with another bHLH protein. Binds DNA as a heterodimer with MAX. Interacts with SIN3A AND SIN3B. Interacts with RNF17.

The protein localises to the nucleus. Transcriptional repressor. Binds with MAX to form a sequence-specific DNA-binding protein complex which recognizes the core sequence 5'-CAC[GA]TG-3'. Antagonizes MYC transcriptional activity by competing for MAX and suppresses MYC dependent cell transformation. The polypeptide is Max dimerization protein 3 (MXD3) (Homo sapiens (Human)).